Consider the following 159-residue polypeptide: Large ribosomal subunit protein mL50 (159 aa).

Belongs to the mitochondrion-specific ribosomal protein mL50 family. Component of the mitochondrial ribosome large subunit (39S) which comprises a 16S rRNA and about 50 distinct proteins.

It is found in the mitochondrion. The protein is Large ribosomal subunit protein mL50 (Mrpl50) of Mus musculus (Mouse).